A 367-amino-acid polypeptide reads, in one-letter code: Probable dual-specificity RNA methyltransferase RlmN (367 aa).

Residue E92 is the Proton acceptor of the active site. The Radical SAM core domain occupies 98-326; sequence QEYGLSVCVT…YDTLKKNGIN (229 aa). A disulfide bridge links C105 with C341. [4Fe-4S] cluster is bound by residues C112, C116, and C119. Residues 164–165, S196, 219–221, and N297 each bind S-adenosyl-L-methionine; these read GE and SLH. The active-site S-methylcysteine intermediate is the C341.

The protein belongs to the radical SAM superfamily. RlmN family. It depends on [4Fe-4S] cluster as a cofactor.

Its subcellular location is the cytoplasm. It catalyses the reaction adenosine(2503) in 23S rRNA + 2 reduced [2Fe-2S]-[ferredoxin] + 2 S-adenosyl-L-methionine = 2-methyladenosine(2503) in 23S rRNA + 5'-deoxyadenosine + L-methionine + 2 oxidized [2Fe-2S]-[ferredoxin] + S-adenosyl-L-homocysteine. The catalysed reaction is adenosine(37) in tRNA + 2 reduced [2Fe-2S]-[ferredoxin] + 2 S-adenosyl-L-methionine = 2-methyladenosine(37) in tRNA + 5'-deoxyadenosine + L-methionine + 2 oxidized [2Fe-2S]-[ferredoxin] + S-adenosyl-L-homocysteine. Its function is as follows. Specifically methylates position 2 of adenine 2503 in 23S rRNA and position 2 of adenine 37 in tRNAs. The polypeptide is Probable dual-specificity RNA methyltransferase RlmN (Listeria monocytogenes serovar 1/2a (strain ATCC BAA-679 / EGD-e)).